Here is a 479-residue protein sequence, read N- to C-terminus: Glycogen synthase (479 aa).

Lys-15 lines the ADP-alpha-D-glucose pocket.

The protein belongs to the glycosyltransferase 1 family. Bacterial/plant glycogen synthase subfamily.

The catalysed reaction is [(1-&gt;4)-alpha-D-glucosyl](n) + ADP-alpha-D-glucose = [(1-&gt;4)-alpha-D-glucosyl](n+1) + ADP + H(+). It participates in glycan biosynthesis; glycogen biosynthesis. Synthesizes alpha-1,4-glucan chains using ADP-glucose. The sequence is that of Glycogen synthase from Clostridium beijerinckii (strain ATCC 51743 / NCIMB 8052) (Clostridium acetobutylicum).